The chain runs to 185 residues: MKGSLYSSKIAEPYAQALIGLAQQQNLTEVFGDNLRSLLTLLQDSPDLSAVLSSPVVKDEDKKSVLRSVLGDGGNGYLLNFLMLLVDKRRIVFLEAICEQYLALLRQFTNTVLAEVTSALKLTDAQKDQVKERVKQLTGAQAVELETKVDGDILGGIVIKVGSQVFDSSLRGQLRRVGLSLGTAL.

Belongs to the ATPase delta chain family. F-type ATPases have 2 components, F(1) - the catalytic core - and F(0) - the membrane proton channel. F(1) has five subunits: alpha(3), beta(3), gamma(1), delta(1), epsilon(1). CF(0) has four main subunits: a(1), b(1), b'(1) and c(10-14). The alpha and beta chains form an alternating ring which encloses part of the gamma chain. F(1) is attached to F(0) by a central stalk formed by the gamma and epsilon chains, while a peripheral stalk is formed by the delta, b and b' chains.

It localises to the cellular thylakoid membrane. Its function is as follows. F(1)F(0) ATP synthase produces ATP from ADP in the presence of a proton or sodium gradient. F-type ATPases consist of two structural domains, F(1) containing the extramembraneous catalytic core and F(0) containing the membrane proton channel, linked together by a central stalk and a peripheral stalk. During catalysis, ATP synthesis in the catalytic domain of F(1) is coupled via a rotary mechanism of the central stalk subunits to proton translocation. In terms of biological role, this protein is part of the stalk that links CF(0) to CF(1). It either transmits conformational changes from CF(0) to CF(1) or is implicated in proton conduction. This Synechocystis sp. (strain ATCC 27184 / PCC 6803 / Kazusa) protein is ATP synthase subunit delta.